A 229-amino-acid chain; its full sequence is Cytochrome c oxidase subunit 2 (229 aa).

Over 1–14 the chain is Mitochondrial intermembrane; the sequence is MANPSQFGFQDASS. The helical transmembrane segment at 15-45 threads the bilayer; it reads PIMEELVEFHDHALMVALAICSLVLYLLALM. At 46–58 the chain is on the mitochondrial matrix side; sequence LVEKLSSNTVDAQ. The helical transmembrane segment at 59-86 threads the bilayer; the sequence is EVELIWTILPAIVLILLALPSLQILYMM. Residues 87–229 lie on the Mitochondrial intermembrane side of the membrane; that stretch reads DEIDEPDLTL…SWSSLLSTDS (143 aa). Residues H160, C195, E197, C199, H203, and M206 each coordinate Cu cation. E197 provides a ligand contact to Mg(2+).

The protein belongs to the cytochrome c oxidase subunit 2 family. As to quaternary structure, component of the cytochrome c oxidase (complex IV, CIV), a multisubunit enzyme composed of 14 subunits. The complex is composed of a catalytic core of 3 subunits MT-CO1, MT-CO2 and MT-CO3, encoded in the mitochondrial DNA, and 11 supernumerary subunits COX4I, COX5A, COX5B, COX6A, COX6B, COX6C, COX7A, COX7B, COX7C, COX8 and NDUFA4, which are encoded in the nuclear genome. The complex exists as a monomer or a dimer and forms supercomplexes (SCs) in the inner mitochondrial membrane with NADH-ubiquinone oxidoreductase (complex I, CI) and ubiquinol-cytochrome c oxidoreductase (cytochrome b-c1 complex, complex III, CIII), resulting in different assemblies (supercomplex SCI(1)III(2)IV(1) and megacomplex MCI(2)III(2)IV(2)). Found in a complex with TMEM177, COA6, COX18, COX20, SCO1 and SCO2. Interacts with TMEM177 in a COX20-dependent manner. Interacts with COX20. Interacts with COX16. The cofactor is Cu cation.

The protein localises to the mitochondrion inner membrane. It carries out the reaction 4 Fe(II)-[cytochrome c] + O2 + 8 H(+)(in) = 4 Fe(III)-[cytochrome c] + 2 H2O + 4 H(+)(out). Component of the cytochrome c oxidase, the last enzyme in the mitochondrial electron transport chain which drives oxidative phosphorylation. The respiratory chain contains 3 multisubunit complexes succinate dehydrogenase (complex II, CII), ubiquinol-cytochrome c oxidoreductase (cytochrome b-c1 complex, complex III, CIII) and cytochrome c oxidase (complex IV, CIV), that cooperate to transfer electrons derived from NADH and succinate to molecular oxygen, creating an electrochemical gradient over the inner membrane that drives transmembrane transport and the ATP synthase. Cytochrome c oxidase is the component of the respiratory chain that catalyzes the reduction of oxygen to water. Electrons originating from reduced cytochrome c in the intermembrane space (IMS) are transferred via the dinuclear copper A center (CU(A)) of subunit 2 and heme A of subunit 1 to the active site in subunit 1, a binuclear center (BNC) formed by heme A3 and copper B (CU(B)). The BNC reduces molecular oxygen to 2 water molecules using 4 electrons from cytochrome c in the IMS and 4 protons from the mitochondrial matrix. In Struthio camelus (Common ostrich), this protein is Cytochrome c oxidase subunit 2 (MT-CO2).